Reading from the N-terminus, the 754-residue chain is Polyribonucleotide nucleotidyltransferase (754 aa).

Residues Asp-525 and Asp-531 each coordinate Mg(2+). One can recognise a KH domain in the interval 591-650 (PRITTIKVPVDKIGEVIGPKGKMINSITEETGASISIEDDGTVFVGASNGEAAQAAIDKI). One can recognise an S1 motif domain in the interval 662–731 (GERFLGTVVK…NRGKISLVLV (70 aa)).

This sequence belongs to the polyribonucleotide nucleotidyltransferase family. It depends on Mg(2+) as a cofactor.

It is found in the cytoplasm. The catalysed reaction is RNA(n+1) + phosphate = RNA(n) + a ribonucleoside 5'-diphosphate. Functionally, involved in mRNA degradation. Catalyzes the phosphorolysis of single-stranded polyribonucleotides processively in the 3'- to 5'-direction. This is Polyribonucleotide nucleotidyltransferase from Mycolicibacterium vanbaalenii (strain DSM 7251 / JCM 13017 / BCRC 16820 / KCTC 9966 / NRRL B-24157 / PYR-1) (Mycobacterium vanbaalenii).